The primary structure comprises 443 residues: ATP-dependent protease ATPase subunit HslU (443 aa).

ATP contacts are provided by residues Ile-18, 60-65, Asp-256, Glu-321, and Arg-393; that span reads GVGKTE.

It belongs to the ClpX chaperone family. HslU subfamily. In terms of assembly, a double ring-shaped homohexamer of HslV is capped on each side by a ring-shaped HslU homohexamer. The assembly of the HslU/HslV complex is dependent on binding of ATP.

It is found in the cytoplasm. ATPase subunit of a proteasome-like degradation complex; this subunit has chaperone activity. The binding of ATP and its subsequent hydrolysis by HslU are essential for unfolding of protein substrates subsequently hydrolyzed by HslV. HslU recognizes the N-terminal part of its protein substrates and unfolds these before they are guided to HslV for hydrolysis. This Salmonella arizonae (strain ATCC BAA-731 / CDC346-86 / RSK2980) protein is ATP-dependent protease ATPase subunit HslU.